A 1103-amino-acid polypeptide reads, in one-letter code: Isoleucine--tRNA ligase (1103 aa).

The 'HIGH' region motif lies at 53 to 63 (PFANGLPHYGH). The short motif at 628 to 632 (KLSKR) is the 'KMSKS' region element. ATP is bound at residue Lys-631.

This sequence belongs to the class-I aminoacyl-tRNA synthetase family. IleS type 2 subfamily. Monomer. Requires Zn(2+) as cofactor.

It is found in the cytoplasm. The catalysed reaction is tRNA(Ile) + L-isoleucine + ATP = L-isoleucyl-tRNA(Ile) + AMP + diphosphate. Functionally, catalyzes the attachment of isoleucine to tRNA(Ile). As IleRS can inadvertently accommodate and process structurally similar amino acids such as valine, to avoid such errors it has two additional distinct tRNA(Ile)-dependent editing activities. One activity is designated as 'pretransfer' editing and involves the hydrolysis of activated Val-AMP. The other activity is designated 'posttransfer' editing and involves deacylation of mischarged Val-tRNA(Ile). The sequence is that of Isoleucine--tRNA ligase from Rickettsia akari (strain Hartford).